A 283-amino-acid polypeptide reads, in one-letter code: 2-dehydro-3-deoxyphosphooctonate aldolase (283 aa).

It belongs to the KdsA family.

The protein resides in the cytoplasm. The catalysed reaction is D-arabinose 5-phosphate + phosphoenolpyruvate + H2O = 3-deoxy-alpha-D-manno-2-octulosonate-8-phosphate + phosphate. The protein operates within carbohydrate biosynthesis; 3-deoxy-D-manno-octulosonate biosynthesis; 3-deoxy-D-manno-octulosonate from D-ribulose 5-phosphate: step 2/3. Its pathway is bacterial outer membrane biogenesis; lipopolysaccharide biosynthesis. The polypeptide is 2-dehydro-3-deoxyphosphooctonate aldolase (Vibrio campbellii (strain ATCC BAA-1116)).